The chain runs to 194 residues: uncharacterized protein (194 aa).

The tract at residues 25 to 156 (PSWACRRGGP…ESPLGTLPCS (132 aa)) is disordered. The segment covering 43-57 (GPSTVPVTPTAGSCQ) has biased composition (polar residues). Over residues 104 to 113 (SSSPGPSFHL) the composition is skewed to low complexity.

This is an uncharacterized protein from Homo sapiens (Human).